Reading from the N-terminus, the 121-residue chain is MARIAGVDIPRDKRVVISLTYVFGIGRTTAQQVLKEAGVSEDTRVRDLTEDELGKIRDIIDKLKVEGDLRREVSLNIKRLIEIGSYRGIRHRRGLPVRGQNTKNNARTRKGPRRTVANKKK.

The interval 93–121 (RGLPVRGQNTKNNARTRKGPRRTVANKKK) is disordered. Basic residues predominate over residues 106–121 (ARTRKGPRRTVANKKK).

This sequence belongs to the universal ribosomal protein uS13 family. In terms of assembly, part of the 30S ribosomal subunit. Forms a loose heterodimer with protein S19. Forms two bridges to the 50S subunit in the 70S ribosome.

Located at the top of the head of the 30S subunit, it contacts several helices of the 16S rRNA. In the 70S ribosome it contacts the 23S rRNA (bridge B1a) and protein L5 of the 50S subunit (bridge B1b), connecting the 2 subunits; these bridges are implicated in subunit movement. Contacts the tRNAs in the A and P-sites. The sequence is that of Small ribosomal subunit protein uS13 from Bacillus pumilus (strain SAFR-032).